The primary structure comprises 759 residues: Arylphorin subunit A4 (759 aa).

Positions 1-16 are cleaved as a signal peptide; the sequence is MKIAIVLLAIIALVAA.

Belongs to the hemocyanin family. In terms of assembly, heterohexamer. In terms of tissue distribution, fat body.

It localises to the secreted. Its subcellular location is the extracellular space. In terms of biological role, arylphorin is a larval storage protein (LSP) which may serve as a storage protein used primarily as a source of aromatic amino acids for protein synthesis during metamorphosis. It is a constituent of the sclerotizing system of the cuticle, and serves as a carrier for ecdysteroid hormone. The protein is Arylphorin subunit A4 of Calliphora vicina (Blue blowfly).